A 359-amino-acid chain; its full sequence is Medium-wave-sensitive opsin 1 (359 aa).

The Extracellular portion of the chain corresponds to 1-47 (MAQQLTGEQTLDHYEDSTQASIFTYTNSNSTRGPFEGPNYHIAPRWV). The segment at 12–38 (DHYEDSTQASIFTYTNSNSTRGPFEGP) is required for 11-cis-retinal regeneration. N29 is a glycosylation site (N-linked (GlcNAc...) asparagine). Residues 48–72 (YHLTSTWMILVVIASVFTNGLVLAA) traverse the membrane as a helical segment. Over 73–84 (TMRFKKLRHPLN) the chain is Cytoplasmic. A helical membrane pass occupies residues 85 to 110 (WILVNLAVADLAETIIASTISVVNQI). Over 111-124 (YGYFVLGHPLCVIE) the chain is Extracellular. C121 and C198 are oxidised to a cystine. A helical membrane pass occupies residues 125 to 144 (GYIVSLCGITGLWSLAIISW). The Cytoplasmic segment spans residues 145–163 (ERWLVVCKPFGNVRFDAKL). Residues 164 to 187 (ATVGIVFSWVWAAVWTAPPIFGWS) form a helical membrane-spanning segment. Topologically, residues 188-213 (RYWPYGLKTSCGPDVFSGTSYPGVQS) are extracellular. The chain crosses the membrane as a helical span at residues 214–241 (YMMVLMVTCCIFPLSIIVLCYLQVWLAI). Residues 242-263 (RAVAKQQKESESTQKAEKEVTR) lie on the Cytoplasmic side of the membrane. A helical membrane pass occupies residues 264 to 287 (MVVVMVFAYCLCWGPYTFFACFAT). At 288–295 (AHPGYAFH) the chain is on the extracellular side. Residues 296–320 (PLVASLPSYFAKSATIYNPIIYVFM) form a helical membrane-spanning segment. K307 carries the N6-(retinylidene)lysine modification. The Cytoplasmic portion of the chain corresponds to 321-359 (NRQFRNCILQLFGKKVDDSSELSSTSKTEVSSVSSVSPA).

It belongs to the G-protein coupled receptor 1 family. Opsin subfamily. Monomer. Homodimer. Homotetramer. Post-translationally, O-glycosylated. In terms of processing, phosphorylated on some or all of the serine and threonine residues present in the C-terminal region. As to expression, expressed in cone photoreceptor cells.

It localises to the membrane. In terms of biological role, visual pigments are the light-absorbing molecules that mediate vision. They consist of an apoprotein, opsin, covalently linked to cis-retinal. May increase spectral sensitivity in dim light. The chain is Medium-wave-sensitive opsin 1 (Opn1mw) from Rattus norvegicus (Rat).